A 72-amino-acid chain; its full sequence is MKPSGLTFAFLVVFMMAIMYNSVQVTADADADAEAEALANALAEAGILMYQGLGEKSDGLDQGQNGKVVAKK.

The N-terminal stretch at M1–A27 is a signal peptide. A propeptide spanning residues D28–A45 is cleaved from the precursor.

Belongs to the formicidae venom precursor-01 superfamily. As to expression, expressed by the venom gland.

The protein resides in the secreted. Its function is as follows. Peptide with unknown function that does not resemble any other pilosulin-like peptide and appears to have a coiled coil structure. This chain is U-poneritoxin(01)-Om7a, found in Odontomachus monticola (Trap-jaw ant).